A 362-amino-acid polypeptide reads, in one-letter code: Probable aromatic amino acid hydroxylase (362 aa).

2 residues coordinate Fe cation: H200 and H205.

Belongs to the biopterin-dependent aromatic amino acid hydroxylase family. Fe(2+) serves as cofactor.

This is Probable aromatic amino acid hydroxylase from Chlamydia pneumoniae (Chlamydophila pneumoniae).